We begin with the raw amino-acid sequence, 309 residues long: MRKIIVGSRKSKLALTQTNWFIDQLKALGLPYEFEVKEIVTKGDVILDVTLSKVGGKGLFVKEIEHALLTKEIDMAVHSMKDMPAVLPEGLMIGCTPKRVDPRDAFISKNGASFKELAEGAILGTSSLRRSAQLLAARPDLQVKWIRGNIDTRLRKLKEEDYDAIILATAGLQRMGWDNDVITEHLDDTLCVPAVGQGALAIECREDDKDLLQLLAHINDTITERTVAAERVFLHKLEGGCQVPIAGYATLTENDAIELTALVGSMDGSVLLKETVVGTNPEEVGLEAADRLIKQGAKELILAANKEQQ.

Cys-241 carries the S-(dipyrrolylmethanemethyl)cysteine modification.

It belongs to the HMBS family. As to quaternary structure, monomer. Dipyrromethane is required as a cofactor.

The enzyme catalyses 4 porphobilinogen + H2O = hydroxymethylbilane + 4 NH4(+). Its pathway is porphyrin-containing compound metabolism; protoporphyrin-IX biosynthesis; coproporphyrinogen-III from 5-aminolevulinate: step 2/4. Its function is as follows. Tetrapolymerization of the monopyrrole PBG into the hydroxymethylbilane pre-uroporphyrinogen in several discrete steps. This Bacillus cereus (strain B4264) protein is Porphobilinogen deaminase.